The primary structure comprises 158 residues: uncharacterized protein (158 aa).

Residues 1 to 30 (MNKKFLKCGTLFLISCSILGSTIPAVTVFS) form the signal peptide.

This is an uncharacterized protein from Streptococcus pneumoniae serotype 2 (strain D39 / NCTC 7466).